Consider the following 300-residue polypeptide: Enoyl-CoA hydratase domain-containing protein 3, mitochondrial (300 aa).

The transit peptide at 1 to 66 (MAVVAGLRAF…RNIVLSNPRR (66 aa)) directs the protein to the mitochondrion. The tract at residues 34–53 (GSAGPAGSESEPRLTSTRQQ) is disordered. Lys110 carries the post-translational modification N6-succinyllysine.

Belongs to the enoyl-CoA hydratase/isomerase family.

The protein resides in the mitochondrion. May play a role in fatty acid biosynthesis and insulin sensitivity. The polypeptide is Enoyl-CoA hydratase domain-containing protein 3, mitochondrial (Mus musculus (Mouse)).